We begin with the raw amino-acid sequence, 360 residues long: Phosphoserine aminotransferase (360 aa).

Position 42 (arginine 42) interacts with L-glutamate. Pyridoxal 5'-phosphate contacts are provided by residues 76 to 77, tryptophan 102, threonine 152, aspartate 172, and glutamine 195; that span reads AR. Lysine 196 carries the N6-(pyridoxal phosphate)lysine modification. 237–238 is a pyridoxal 5'-phosphate binding site; sequence NT.

Belongs to the class-V pyridoxal-phosphate-dependent aminotransferase family. SerC subfamily. Homodimer. Pyridoxal 5'-phosphate is required as a cofactor.

The protein resides in the cytoplasm. It catalyses the reaction O-phospho-L-serine + 2-oxoglutarate = 3-phosphooxypyruvate + L-glutamate. The enzyme catalyses 4-(phosphooxy)-L-threonine + 2-oxoglutarate = (R)-3-hydroxy-2-oxo-4-phosphooxybutanoate + L-glutamate. It participates in amino-acid biosynthesis; L-serine biosynthesis; L-serine from 3-phospho-D-glycerate: step 2/3. Its pathway is cofactor biosynthesis; pyridoxine 5'-phosphate biosynthesis; pyridoxine 5'-phosphate from D-erythrose 4-phosphate: step 3/5. Catalyzes the reversible conversion of 3-phosphohydroxypyruvate to phosphoserine and of 3-hydroxy-2-oxo-4-phosphonooxybutanoate to phosphohydroxythreonine. The polypeptide is Phosphoserine aminotransferase (Pasteurella multocida (strain Pm70)).